We begin with the raw amino-acid sequence, 948 residues long: Phosphatidylinositol-glycan-specific phospholipase D (948 aa).

The first 24 residues, M1–G24, serve as a signal peptide directing secretion. Residues N39, N78, N148, N300, N433, N452, N506, and N535 are each glycosylated (N-linked (GlcNAc...) asparagine). FG-GAP repeat units follow at residues T451–I512, Q526–G588, L596–G656, and D663–F724. N-linked (GlcNAc...) asparagine glycans are attached at residues N749 and N788. FG-GAP repeat units follow at residues N799–D861 and S895–Q948.

It belongs to the GPLD1 family. It depends on Ca(2+) as a cofactor.

It is found in the secreted. It catalyses the reaction a 6-(alpha-D-glucosaminyl)-1-(1,2-diacyl-sn-glycero-3-phospho)-1D-myo-inositol + H2O = 6-(alpha-D-glucosaminyl)-1D-myo-inositol + a 1,2-diacyl-sn-glycero-3-phosphate + H(+). Functionally, hydrolyzes the inositol phosphate linkage in proteins anchored by phosphatidylinositol glycans (GPI-anchor) thus releasing these proteins from the membrane. May also cleave GPI anchor intermediates intracellularly. The polypeptide is Phosphatidylinositol-glycan-specific phospholipase D (pldG) (Dictyostelium discoideum (Social amoeba)).